The primary structure comprises 360 residues: MNKILFIFTLFFSSGFFTFAVSADKNPGSENMTNTIGPHDRGGSSPIYNILNSYLTAYNGSHHLYDRMSFLCLSSQNTLNGACPSSDAPGTATIDGETNITLQFTEKRSLIKRELQIKGYKQFLFKNANCPSKLALNSSHFQCNREQASGATLSLYIPAGELNKLPFGGVWNAVLKLNVKRRYDTTYGTYTINITVNLTDKGNIQIWLPQFKSNARVDLNLRPTGGGTYIGRNSVDMCFYDGYSTNSSSLEIRFQDDNSKSDGKFYLKKINDDSKELVYTLSLLLAGKNLTPTNGQALNINTASLETNWNRITAVTMPEISVPVLCWPGRLQLDAKVKNPEAGQYMGNIKITFTPSSQTL.

It localises to the fimbrium. This is CFA/I fimbrial subunit E (cfaE) from Escherichia coli.